A 928-amino-acid chain; its full sequence is Type II inositol 3,4-bisphosphate 4-phosphatase (928 aa).

Over residues 1-13 the composition is skewed to basic and acidic residues; it reads MEIKEEGTSEEGQ. 3 disordered regions span residues 1–23, 481–516, and 548–575; these read MEIKEEGTSEEGQHFLPAAQAND, ILRKPPSPKVSTEEKSSQHDSPQQLRRQDSIPHHSD, and SRNDKSTGGDSSKDGDADPNLEDSLTSH. The C2 domain maps to 23–165; it reads DPEDIQFTSI…LKSKEQLLSL (143 aa). 2 stretches are compositionally biased toward basic and acidic residues: residues 506–516 and 548–563; these read RRQDSIPHHSD and SRNDKSTGGDSSKDGD.

This sequence belongs to the inositol 3,4-bisphosphate 4-phosphatase family.

It carries out the reaction a 1,2-diacyl-sn-glycero-3-phospho-(1D-myo-inositol-3,4-bisphosphate) + H2O = a 1,2-diacyl-sn-glycero-3-phospho-(1D-myo-inositol-3-phosphate) + phosphate. The enzyme catalyses 1D-myo-inositol 3,4-bisphosphate + H2O = 1D-myo-inositol 3-phosphate + phosphate. It catalyses the reaction 1D-myo-inositol 1,3,4-trisphosphate + H2O = 1D-myo-inositol 1,3-bisphosphate + phosphate. It participates in signal transduction; phosphatidylinositol signaling pathway. Strongly inhibited by inositol hexakisphosphate. Functionally, catalyzes the hydrolysis of the 4-position phosphate of phosphatidylinositol 3,4-bisphosphate, inositol 1,3,4-trisphosphate and inositol 3,4-bisphosphate. Plays a role in the late stages of macropinocytosis by dephosphorylating phosphatidylinositol 3,4-bisphosphate in membrane ruffles. The lipid phosphatase activity is critical for tumor suppressor function. Antagonizes the PI3K-AKT/PKB signaling pathway by dephosphorylating phosphoinositides and thereby modulating cell cycle progression and cell survival. This chain is Type II inositol 3,4-bisphosphate 4-phosphatase (Inpp4b), found in Rattus norvegicus (Rat).